Consider the following 122-residue polypeptide: Small ribosomal subunit protein uS13 (122 aa).

The segment at 95–122 (NLPVRGQRTHTNARTRKGKAKPIAGKKK) is disordered.

This sequence belongs to the universal ribosomal protein uS13 family. Part of the 30S ribosomal subunit. Forms a loose heterodimer with protein S19. Forms two bridges to the 50S subunit in the 70S ribosome.

Functionally, located at the top of the head of the 30S subunit, it contacts several helices of the 16S rRNA. In the 70S ribosome it contacts the 23S rRNA (bridge B1a) and protein L5 of the 50S subunit (bridge B1b), connecting the 2 subunits; these bridges are implicated in subunit movement. Contacts the tRNAs in the A and P-sites. The polypeptide is Small ribosomal subunit protein uS13 (Methylobacterium sp. (strain 4-46)).